The primary structure comprises 1534 residues: Dicer-like protein 1 (1534 aa).

A disordered region spans residues proline 36–lysine 70. Residues glutamate 51–isoleucine 60 show a composition bias toward acidic residues. The 182-residue stretch at leucine 130–leucine 311 folds into the Helicase ATP-binding domain. Residue leucine 143–threonine 150 participates in ATP binding. The DEAH box motif lies at aspartate 256 to histidine 259. Residues glutamate 456–isoleucine 613 enclose the Helicase C-terminal domain. Positions alanine 648–alanine 738 constitute a Dicer dsRNA-binding fold domain. Positions lysine 888 to alanine 1016 constitute a PAZ domain. RNase III domains lie at serine 1054–glycine 1199 and alanine 1250–aspartate 1402. 3 residues coordinate Mg(2+): glutamate 1291, aspartate 1388, and glutamate 1391. The DRBM domain occupies threonine 1436–glycine 1504. 4 residues coordinate Zn(2+): cysteine 1448, histidine 1475, cysteine 1516, and cysteine 1518.

This sequence belongs to the helicase family. Dicer subfamily. Requires Mg(2+) as cofactor. Mn(2+) serves as cofactor.

In terms of biological role, dicer-like endonuclease involved in cleaving double-stranded RNA in the RNA interference (RNAi) pathway. Produces 21 to 25 bp dsRNAs (siRNAs) which target the selective destruction of homologous RNAs leading to sequence-specific suppression of gene expression, called post-transcriptional gene silencing (PTGS). Part of a broad host defense response against viral infection and transposons. The chain is Dicer-like protein 1 (dcl1) from Aspergillus clavatus (strain ATCC 1007 / CBS 513.65 / DSM 816 / NCTC 3887 / NRRL 1 / QM 1276 / 107).